The following is a 96-amino-acid chain: Glutamyl-tRNA(Gln) amidotransferase subunit C (96 aa).

It belongs to the GatC family. In terms of assembly, heterotrimer of A, B and C subunits.

The enzyme catalyses L-glutamyl-tRNA(Gln) + L-glutamine + ATP + H2O = L-glutaminyl-tRNA(Gln) + L-glutamate + ADP + phosphate + H(+). The catalysed reaction is L-aspartyl-tRNA(Asn) + L-glutamine + ATP + H2O = L-asparaginyl-tRNA(Asn) + L-glutamate + ADP + phosphate + 2 H(+). Functionally, allows the formation of correctly charged Asn-tRNA(Asn) or Gln-tRNA(Gln) through the transamidation of misacylated Asp-tRNA(Asn) or Glu-tRNA(Gln) in organisms which lack either or both of asparaginyl-tRNA or glutaminyl-tRNA synthetases. The reaction takes place in the presence of glutamine and ATP through an activated phospho-Asp-tRNA(Asn) or phospho-Glu-tRNA(Gln). This chain is Glutamyl-tRNA(Gln) amidotransferase subunit C, found in Neisseria meningitidis serogroup B (strain ATCC BAA-335 / MC58).